The chain runs to 438 residues: Methylenetetrahydrofolate--tRNA-(uracil-5-)-methyltransferase TrmFO (438 aa).

7–12 contributes to the FAD binding site; that stretch reads GAGLAG.

The protein belongs to the MnmG family. TrmFO subfamily. Requires FAD as cofactor.

It localises to the cytoplasm. The catalysed reaction is uridine(54) in tRNA + (6R)-5,10-methylene-5,6,7,8-tetrahydrofolate + NADH + H(+) = 5-methyluridine(54) in tRNA + (6S)-5,6,7,8-tetrahydrofolate + NAD(+). The enzyme catalyses uridine(54) in tRNA + (6R)-5,10-methylene-5,6,7,8-tetrahydrofolate + NADPH + H(+) = 5-methyluridine(54) in tRNA + (6S)-5,6,7,8-tetrahydrofolate + NADP(+). Functionally, catalyzes the folate-dependent formation of 5-methyl-uridine at position 54 (M-5-U54) in all tRNAs. The sequence is that of Methylenetetrahydrofolate--tRNA-(uracil-5-)-methyltransferase TrmFO from Sulfurihydrogenibium sp. (strain YO3AOP1).